The following is a 165-amino-acid chain: Glucosamine 6-phosphate N-acetyltransferase (165 aa).

The N-acetyltransferase domain maps to 22–165 (FKVRPLAKDD…DDCNFMTQRF (144 aa)). Substrate-binding positions include T44, 92–95 (KFIH), and 104–106 (EDV). 114 to 119 (RQKLGA) contributes to the acetyl-CoA binding site. Substrate-binding positions include 135 to 136 (YK) and R164.

Belongs to the acetyltransferase family. GNA1 subfamily.

It catalyses the reaction D-glucosamine 6-phosphate + acetyl-CoA = N-acetyl-D-glucosamine 6-phosphate + CoA + H(+). Its pathway is nucleotide-sugar biosynthesis; UDP-N-acetyl-alpha-D-glucosamine biosynthesis; N-acetyl-alpha-D-glucosamine 1-phosphate from alpha-D-glucosamine 6-phosphate (route I): step 1/2. This is Glucosamine 6-phosphate N-acetyltransferase (gna-1) from Caenorhabditis elegans.